A 394-amino-acid polypeptide reads, in one-letter code: Alcohol dehydrogenase-like 3 (394 aa).

8 residues coordinate Zn(2+): C48, T50, H71, C101, C104, C107, C115, and C188. An alcohol-binding residues include T50 and H71. An NAD(+)-binding site is contributed by T50. NAD(+)-binding positions include G213 to G218, D237, K242, T283, V306, V306 to I308, F333, and R383.

Belongs to the zinc-containing alcohol dehydrogenase family. Class-III subfamily. Homodimer. Requires Zn(2+) as cofactor.

Its subcellular location is the cytoplasm. The enzyme catalyses a primary alcohol + NAD(+) = an aldehyde + NADH + H(+). It carries out the reaction a secondary alcohol + NAD(+) = a ketone + NADH + H(+). This Arabidopsis thaliana (Mouse-ear cress) protein is Alcohol dehydrogenase-like 3.